The sequence spans 280 residues: Phospholipase C D (280 aa).

A disordered region spans residues 258-280; it reads VPDPQIMPTQETTPTRGIPSGPC.

This sequence belongs to the bacterial phospholipase C family.

Its subcellular location is the secreted. It is found in the cell wall. The enzyme catalyses a 1,2-diacyl-sn-glycero-3-phosphocholine + H2O = phosphocholine + a 1,2-diacyl-sn-glycerol + H(+). It carries out the reaction 1,2-dihexadecanoyl-sn-glycero-3-phosphocholine + H2O = 1,2-dihexadecanoyl-sn-glycerol + phosphocholine + H(+). Functionally, involved in virulence. Induces cytotoxic effects on mouse macrophage cell lines, via direct or indirect enzymatic hydrolysis of cell membrane phospholipids. Hydrolyzes phosphatidylcholine. Does not have hemolytic activity. This is Phospholipase C D from Mycobacterium tuberculosis (strain ATCC 25618 / H37Rv).